The primary structure comprises 500 residues: Na(+)/H(+) antiporter NhaB (500 aa).

The next 13 membrane-spanning stretches (helical) occupy residues 11 to 31 (HGFL…FLVL), 34 to 54 (LLLA…EFIF), 58 to 78 (MALK…ALLL), 96 to 116 (VILL…LLLF), 121 to 141 (ILLG…LSAF), 145 to 165 (FLDA…FYAV), 205 to 225 (LLMH…VGEP), 241 to 261 (FLLK…LTCV), 311 to 331 (ILII…LMVI), 350 to 370 (FQDA…VAVI), 394 to 414 (MLYL…VATI), 450 to 470 (ATPN…APLI), and 477 to 497 (MVWM…WAVT).

Belongs to the NhaB Na(+)/H(+) (TC 2.A.34) antiporter family.

It is found in the cell inner membrane. The enzyme catalyses 2 Na(+)(in) + 3 H(+)(out) = 2 Na(+)(out) + 3 H(+)(in). Its function is as follows. Na(+)/H(+) antiporter that extrudes sodium in exchange for external protons. This chain is Na(+)/H(+) antiporter NhaB, found in Pseudomonas putida (strain ATCC 700007 / DSM 6899 / JCM 31910 / BCRC 17059 / LMG 24140 / F1).